Consider the following 304-residue polypeptide: UDP-3-O-acyl-N-acetylglucosamine deacetylase (304 aa).

Zn(2+) contacts are provided by histidine 78, histidine 237, and aspartate 241. Histidine 264 (proton donor) is an active-site residue.

The protein belongs to the LpxC family. The cofactor is Zn(2+).

The catalysed reaction is a UDP-3-O-[(3R)-3-hydroxyacyl]-N-acetyl-alpha-D-glucosamine + H2O = a UDP-3-O-[(3R)-3-hydroxyacyl]-alpha-D-glucosamine + acetate. It participates in glycolipid biosynthesis; lipid IV(A) biosynthesis; lipid IV(A) from (3R)-3-hydroxytetradecanoyl-[acyl-carrier-protein] and UDP-N-acetyl-alpha-D-glucosamine: step 2/6. Its function is as follows. Catalyzes the hydrolysis of UDP-3-O-myristoyl-N-acetylglucosamine to form UDP-3-O-myristoylglucosamine and acetate, the committed step in lipid A biosynthesis. This is UDP-3-O-acyl-N-acetylglucosamine deacetylase from Legionella pneumophila (strain Lens).